A 481-amino-acid polypeptide reads, in one-letter code: Putative amino-acid transporter CPE0389 (481 aa).

13 helical membrane-spanning segments follow: residues 7-27 (LGVI…GVYN), 36-56 (ASAG…WFIA), 87-107 (FLMA…YAVL), 127-147 (LSIA…LAGV), 156-176 (IGTI…LFSF), 208-228 (STML…VVSG), 241-261 (FLGF…PLGV), 289-309 (VIMN…WTVM), 338-358 (FSLL…HFAG), 364-384 (MLSI…LYLF), 401-421 (RKYA…LIYA), 422-442 (AGIN…PVFI), and 461-481 (YFAI…FKFM).

The protein belongs to the amino acid-polyamine-organocation (APC) superfamily. Basic amino acid/polyamine antiporter (APA) (TC 2.A.3.2) family.

The protein resides in the cell membrane. Its function is as follows. Could be an amino acid transporter. The polypeptide is Putative amino-acid transporter CPE0389 (Clostridium perfringens (strain 13 / Type A)).